The sequence spans 356 residues: Aromatic dipeptide epimerase (356 aa).

Substrate-binding positions include Thr136 and 161-163 (KVK). Positions 191, 219, and 244 each coordinate Mg(2+). Residues Lys268 and 320–322 (DLD) contribute to the substrate site.

It belongs to the mandelate racemase/muconate lactonizing enzyme family. Requires Mg(2+) as cofactor.

Has epimerase activity with a variety of hydrophobic dipeptides (in vitro). Enzyme activity is highest with L-Phe-L-Tyr, but is still relatively low, suggesting that L-Phe-L-Tyr is not the physiological substrate. The polypeptide is Aromatic dipeptide epimerase (Herpetosiphon aurantiacus (strain ATCC 23779 / DSM 785 / 114-95)).